A 492-amino-acid chain; its full sequence is 3-octaprenyl-4-hydroxybenzoate carboxy-lyase (492 aa).

Asn175 serves as a coordination point for Mn(2+). Prenylated FMN contacts are provided by residues 178–180 (IYR), 192–194 (RWL), and 197–198 (RG). Position 241 (Glu241) interacts with Mn(2+). The Proton donor role is filled by Asp290.

The protein belongs to the UbiD family. Homohexamer. Prenylated FMN serves as cofactor. It depends on Mn(2+) as a cofactor.

The protein resides in the cell membrane. It catalyses the reaction a 4-hydroxy-3-(all-trans-polyprenyl)benzoate + H(+) = a 2-(all-trans-polyprenyl)phenol + CO2. The protein operates within cofactor biosynthesis; ubiquinone biosynthesis. Its function is as follows. Catalyzes the decarboxylation of 3-octaprenyl-4-hydroxy benzoate to 2-octaprenylphenol, an intermediate step in ubiquinone biosynthesis. The sequence is that of 3-octaprenyl-4-hydroxybenzoate carboxy-lyase from Salmonella typhi.